The chain runs to 3859 residues: Transformation/transcription domain-associated protein (3859 aa).

A2 carries the N-acetylalanine modification. Positions 491 to 526 are enriched in pro residues; the sequence is PAAPGPAPSPAPVPAPPPPPPPPPPATPVTPAPVPP. Residues 491–541 are disordered; it reads PAAPGPAPSPAPVPAPPPPPPPPPPATPVTPAPVPPFEKQGEKDKEDKQTF. Basic and acidic residues predominate over residues 529–539; that stretch reads KQGEKDKEDKQ. S1628 carries the post-translational modification Phosphoserine. The interaction with TP53 stretch occupies residues 2010–2388; that stretch reads SEVVIKWELQ…SPMAANQTPT (379 aa). The disordered stretch occupies residues 2023–2044; sequence DQQPDSDMDPNSSGEGVNSVSS. Residues 2033–2044 are compositionally biased toward low complexity; that stretch reads NSSGEGVNSVSS. Positions 2047-2062 match the Bipartite nuclear localization signal motif; that stretch reads KRGLSVDSAQEVKRFR. A phosphoserine mark is found at S2051 and S2077. K2543 is covalently cross-linked (Glycyl lysine isopeptide (Lys-Gly) (interchain with G-Cter in SUMO2)). Over residues 2543–2554 the composition is skewed to basic and acidic residues; it reads KQEPRERENSES. The tract at residues 2543 to 2578 is disordered; the sequence is KQEPRERENSESKEEDVEIDIELAPGDQTSTPKTKE. In terms of domain architecture, FAT spans 2692-3275; sequence VLKYLGKTHN…YFPIRTLYLT (584 aa). Residue K3078 is modified to N6-acetyllysine. A PI3K/PI4K catalytic domain is found at 3500–3823; it reads MPRVEIVQKH…AVTAIMTRLH (324 aa). Residues 3506-3512 are G-loop; that stretch reads VQKHNTA. The interval 3687 to 3695 is catalytic loop; the sequence is HLNRLNPEM. An activation loop region spans residues 3707-3732; sequence VAYFRFDINDATGDLDANRPVPFRLT. Residues 3827–3859 enclose the FATC domain; that stretch reads QFEGGESKVNTLVAAANSLDNLCRMDPAWHPWL.

It belongs to the PI3/PI4-kinase family. TRA1 subfamily. Interacts with MYC, E2F1 and E2F4 transcription factors. Interacts directly with p53/TP53. Interacts with GCN5L2. Component of various HAT complexes. Component of the PCAF complex, at least composed of TADA2L/ADA2, SUPT3H, TADA3L/ADA3, TAF5L/PAF65-beta, TAF6L/PAF65-alpha, TAF10/TAFII30, TAF12/TAFII20, TAF9/TAFII31 and TRRAP. Component of the TFTC-HAT complex, at least composed of TAF5L, TAF6L, TADA3L, SUPT3H/SPT3, TAF2/TAFII150, TAF4/TAFII135, TAF5/TAFII100, GCN5L2/GCN5, TAF10 and TRRAP. Component of the NuA4 histone acetyltransferase complex which contains the catalytic subunit KAT5/TIP60 and the subunits EP400, TRRAP/PAF400, BRD8/SMAP, EPC1, DMAP1/DNMAP1, RUVBL1/TIP49, RUVBL2, ING3, actin, ACTL6A/BAF53A, MORF4L1/MRG15, MORF4L2/MRGX, MRGBP, YEATS4/GAS41, VPS72/YL1 and MEAF6. Component of the STAGA complex, at least composed of SUPT3H, GCN5L2, SUPT7L, TAF5L, TAF6L, TADA3L, TAD1L, TAF10, TAF12, TRRAP and TAF9. The STAGA core complex is associated with a subcomplex required for histone deubiquitination composed of ATXN7L3, ENY2 and USP22. Component of the BAF53 complex, at least composed of BAF53A, RUVBL1, SMARCA4/BRG1, and TRRAP, which preferentially acetylates histone H4 (and H2A) within nucleosomes. Interacts with NPAT. Interaction with TELO2 and TTI1. Component of a SWR1-like complex.

The protein resides in the nucleus. In terms of biological role, adapter protein, which is found in various multiprotein chromatin complexes with histone acetyltransferase activity (HAT), which gives a specific tag for epigenetic transcription activation. Component of the NuA4 histone acetyltransferase complex which is responsible for acetylation of nucleosomal histones H4 and H2A. Plays a central role in MYC transcription activation, and also participates in cell transformation by MYC. Required for p53/TP53-, E2F1- and E2F4-mediated transcription activation. Also involved in transcription activation mediated by the adenovirus E1A, a viral oncoprotein that deregulates transcription of key genes. Probably acts by linking transcription factors such as E1A, MYC or E2F1 to HAT complexes such as STAGA thereby allowing transcription activation. Probably not required in the steps following histone acetylation in processes of transcription activation. May be required for the mitotic checkpoint and normal cell cycle progression. Component of a SWR1-like complex that specifically mediates the removal of histone H2A.Z/H2AZ1 from the nucleosome. May play a role in the formation and maintenance of the auditory system. The polypeptide is Transformation/transcription domain-associated protein (TRRAP) (Homo sapiens (Human)).